A 578-amino-acid polypeptide reads, in one-letter code: Membrane protein insertase YidC (578 aa).

A helical membrane pass occupies residues 3–23 (IQRSILIVALAVVSYLLVLQW). Positions 34–72 (AASASMNTTQGLPDTPSASGTSSDVPTAQSSAAGSEAAD) are disordered. The span at 37 to 66 (ASMNTTQGLPDTPSASGTSSDVPTAQSSAA) shows a compositional bias: polar residues. 5 helical membrane-spanning segments follow: residues 361-381 (LELTVDYGFLWFIAQPIFWLL), 387-407 (LIGNWGWSIIALTVLIKLAFF), 457-477 (LGGCLPILVQMPVFLSLYWVL), 500-520 (PFFILPIVMGGTMLIQQMLNP), and 535-555 (PIIFTFFFLWFPAGLVLYWVV).

Belongs to the OXA1/ALB3/YidC family. Type 1 subfamily. Interacts with the Sec translocase complex via SecD. Specifically interacts with transmembrane segments of nascent integral membrane proteins during membrane integration.

The protein localises to the cell inner membrane. In terms of biological role, required for the insertion and/or proper folding and/or complex formation of integral membrane proteins into the membrane. Involved in integration of membrane proteins that insert both dependently and independently of the Sec translocase complex, as well as at least some lipoproteins. Aids folding of multispanning membrane proteins. This is Membrane protein insertase YidC from Pseudomonas aeruginosa (strain LESB58).